The following is a 63-amino-acid chain: U-reduvitoxin-Pr9a (63 aa).

Positions 1-19 (MRFFSLFTFLVAFIAAALA) are cleaved as a signal peptide. A propeptide spanning residues 20–42 (APVEIGEDLFALRPTGAKRDIIL) is cleaved from the precursor. Residues cysteine 47 and cysteine 60 are joined by a disulfide bond.

Expressed by the venom gland.

Its subcellular location is the secreted. This is U-reduvitoxin-Pr9a from Platymeris rhadamanthus (Red spot assassin bug).